The chain runs to 166 residues: uncharacterized protein (166 aa).

A run of 4 helical transmembrane segments spans residues 7–27, 30–50, 69–89, and 92–112; these read VLFK…SLFY, FLFA…YCYI, IETL…KSLL, and NSFF…LVLF.

The protein to M.jannaschii MJ0795.1 and MJ0785.1.

It is found in the cell membrane. This is an uncharacterized protein from Methanocaldococcus jannaschii (strain ATCC 43067 / DSM 2661 / JAL-1 / JCM 10045 / NBRC 100440) (Methanococcus jannaschii).